A 910-amino-acid polypeptide reads, in one-letter code: von Willebrand factor A domain-containing protein DDB_G0292740 (910 aa).

The VIT domain maps to A63–S194. The disordered stretch occupies residues I297–N318. Positions E346–L515 constitute a VWFA domain. The segment covering Q703–F719 has biased composition (low complexity). Positions Q703 to D815 are disordered. Residues A720–G749 show a composition bias toward pro residues. A compositionally biased stretch (low complexity) spans A750–S802. Residues Y803–D815 are compositionally biased toward polar residues.

The protein is von Willebrand factor A domain-containing protein DDB_G0292740 of Dictyostelium discoideum (Social amoeba).